The following is a 312-amino-acid chain: Glyoxylate/hydroxypyruvate reductase A (312 aa).

Residue R227 is part of the active site. H275 acts as the Proton donor in catalysis.

This sequence belongs to the D-isomer specific 2-hydroxyacid dehydrogenase family. GhrA subfamily.

Its subcellular location is the cytoplasm. The catalysed reaction is glycolate + NADP(+) = glyoxylate + NADPH + H(+). The enzyme catalyses (R)-glycerate + NAD(+) = 3-hydroxypyruvate + NADH + H(+). It carries out the reaction (R)-glycerate + NADP(+) = 3-hydroxypyruvate + NADPH + H(+). Its function is as follows. Catalyzes the NADPH-dependent reduction of glyoxylate and hydroxypyruvate into glycolate and glycerate, respectively. In Escherichia coli (strain UTI89 / UPEC), this protein is Glyoxylate/hydroxypyruvate reductase A.